The primary structure comprises 356 residues: Holliday junction branch migration complex subunit RuvB (356 aa).

Positions 4-191 (TDKLATEQRI…FGIVARLEFY (188 aa)) are large ATPase domain (RuvB-L). Residues Leu-30, Arg-31, Gly-72, Lys-75, Thr-76, Thr-77, 138 to 140 (EDY), Arg-181, Tyr-191, and Arg-228 each bind ATP. Thr-76 is a binding site for Mg(2+). Residues 192 to 262 (DAEQLSRIVR…VADAALAMLD (71 aa)) form a small ATPAse domain (RuvB-S) region. Residues 265–356 (PVGFDLMDRK…RDEWDTPDGK (92 aa)) form a head domain (RuvB-H) region. DNA is bound by residues Arg-301, Arg-320, and Arg-325.

It belongs to the RuvB family. In terms of assembly, homohexamer. Forms an RuvA(8)-RuvB(12)-Holliday junction (HJ) complex. HJ DNA is sandwiched between 2 RuvA tetramers; dsDNA enters through RuvA and exits via RuvB. An RuvB hexamer assembles on each DNA strand where it exits the tetramer. Each RuvB hexamer is contacted by two RuvA subunits (via domain III) on 2 adjacent RuvB subunits; this complex drives branch migration. In the full resolvosome a probable DNA-RuvA(4)-RuvB(12)-RuvC(2) complex forms which resolves the HJ.

Its subcellular location is the cytoplasm. The enzyme catalyses ATP + H2O = ADP + phosphate + H(+). The RuvA-RuvB-RuvC complex processes Holliday junction (HJ) DNA during genetic recombination and DNA repair, while the RuvA-RuvB complex plays an important role in the rescue of blocked DNA replication forks via replication fork reversal (RFR). RuvA specifically binds to HJ cruciform DNA, conferring on it an open structure. The RuvB hexamer acts as an ATP-dependent pump, pulling dsDNA into and through the RuvAB complex. RuvB forms 2 homohexamers on either side of HJ DNA bound by 1 or 2 RuvA tetramers; 4 subunits per hexamer contact DNA at a time. Coordinated motions by a converter formed by DNA-disengaged RuvB subunits stimulates ATP hydrolysis and nucleotide exchange. Immobilization of the converter enables RuvB to convert the ATP-contained energy into a lever motion, pulling 2 nucleotides of DNA out of the RuvA tetramer per ATP hydrolyzed, thus driving DNA branch migration. The RuvB motors rotate together with the DNA substrate, which together with the progressing nucleotide cycle form the mechanistic basis for DNA recombination by continuous HJ branch migration. Branch migration allows RuvC to scan DNA until it finds its consensus sequence, where it cleaves and resolves cruciform DNA. The sequence is that of Holliday junction branch migration complex subunit RuvB from Burkholderia cenocepacia (strain HI2424).